The chain runs to 131 residues: uncharacterized protein (131 aa).

The interval 15–43 is disordered; sequence QLQAEHGSAPSNIASGPSSNQQQQEVQDE. Residues 23–34 show a composition bias toward polar residues; the sequence is APSNIASGPSSN.

It belongs to the PDCD5 family.

This is an uncharacterized protein from Schizosaccharomyces pombe (strain 972 / ATCC 24843) (Fission yeast).